Reading from the N-terminus, the 144-residue chain is Large ribosomal subunit protein uL15 (144 aa).

Residues Met1–Gly53 are disordered. The span at Arg21 to Ser31 shows a compositional bias: gly residues.

This sequence belongs to the universal ribosomal protein uL15 family. As to quaternary structure, part of the 50S ribosomal subunit.

In terms of biological role, binds to the 23S rRNA. The sequence is that of Large ribosomal subunit protein uL15 from Histophilus somni (strain 129Pt) (Haemophilus somnus).